We begin with the raw amino-acid sequence, 344 residues long: L-rhamnose-proton symporter (344 aa).

10 consecutive transmembrane segments (helical) span residues 5–25 (ILLGIFWHFVGATSAACFYAP), 38–58 (WAIAGIFSWILLPWGISYWLL), 72–92 (ILLPVFLFGAMWGIGNIGYGL), 101–121 (MGIGIAIGITLIVGTLMTPII), 137–157 (TLIGVVIAVVGVAVVSYAGLL), 175–195 (LALAVMCGIFSAGMSFAMSAA), 214–234 (LPSYVVIMGGGAIINLGFCII), 259–279 (ILFSALGGIMWYFQFFFYAWG), 289–309 (FMSWMLHMSFYVLCGGIVGLL), and 323–343 (VLCIGCLIIVLAANIVGLGMA).

The protein belongs to the L-rhamnose transporter (TC 2.A.7.6) family.

The protein resides in the cell inner membrane. The catalysed reaction is L-rhamnopyranose(in) + H(+)(in) = L-rhamnopyranose(out) + H(+)(out). In terms of biological role, uptake of L-rhamnose across the cytoplasmic membrane with the concomitant transport of protons into the cell (symport system). This Mannheimia succiniciproducens (strain KCTC 0769BP / MBEL55E) protein is L-rhamnose-proton symporter.